A 174-amino-acid polypeptide reads, in one-letter code: Ribosome maturation factor RimM (174 aa).

In terms of domain architecture, PRC barrel spans 96-169; that stretch reads EPDTYYDHQL…ILEIDPPDGL (74 aa).

The protein belongs to the RimM family. Binds ribosomal protein uS19.

It is found in the cytoplasm. An accessory protein needed during the final step in the assembly of 30S ribosomal subunit, possibly for assembly of the head region. Essential for efficient processing of 16S rRNA. May be needed both before and after RbfA during the maturation of 16S rRNA. It has affinity for free ribosomal 30S subunits but not for 70S ribosomes. In Mycobacterium marinum (strain ATCC BAA-535 / M), this protein is Ribosome maturation factor RimM.